The sequence spans 363 residues: Flagellar P-ring protein (363 aa).

The first 20 residues, 1–20, serve as a signal peptide directing secretion; that stretch reads MKKFTLLLLCFVLPMTSAYA.

It belongs to the FlgI family. As to quaternary structure, the basal body constitutes a major portion of the flagellar organelle and consists of four rings (L,P,S, and M) mounted on a central rod.

It localises to the periplasm. The protein localises to the bacterial flagellum basal body. Functionally, assembles around the rod to form the L-ring and probably protects the motor/basal body from shearing forces during rotation. This Vibrio vulnificus (strain YJ016) protein is Flagellar P-ring protein.